The following is a 249-amino-acid chain: Sesquipedalian-1 (249 aa).

The PH domain occupies 17–113; it reads PVDNAGFLYK…WVKALSRASF (97 aa). Disordered regions lie at residues 134-159 and 194-219; these read GGMALPQPQPQSLPLPPSLPSALAPV and EATFRPGPEPPPPPPRRRASAPHGPL. The span at 140 to 152 shows a compositional bias: pro residues; sequence QPQPQSLPLPPSL. The residue at position 213 (serine 213) is a Phosphoserine. The short motif at 223-235 is the F&amp;H element; the sequence is PFARLHECYGQEI.

This sequence belongs to the sesquipedalian family. As to quaternary structure, forms homodimers and heterodimers with PHETA2. Interacts with OCRL and INPP5B. Interaction with OCRL may be important for endosomal morphology and function.

The protein localises to the early endosome. It localises to the recycling endosome. It is found in the golgi apparatus. The protein resides in the trans-Golgi network. Its subcellular location is the cytoplasmic vesicle. The protein localises to the clathrin-coated vesicle. Plays a role in endocytic trafficking. Required for receptor recycling from endosomes, both to the trans-Golgi network and the plasma membrane. In Homo sapiens (Human), this protein is Sesquipedalian-1.